The primary structure comprises 264 residues: Short chain dehydrogenase/reductase dmxR18 (264 aa).

4 residues coordinate NADP(+): isoleucine 24, aspartate 70, asparagine 97, and arginine 130. Residues serine 146 and serine 147 each act as proton donor in the active site. NADP(+)-binding residues include tyrosine 161, lysine 165, and threonine 196. Tyrosine 161 functions as the Proton acceptor in the catalytic mechanism. Lysine 165 (lowers pKa of active site Tyr) is an active-site residue.

This sequence belongs to the short-chain dehydrogenases/reductases (SDR) family.

The enzyme catalyses 3,8,9,10-tetrahydroxy-6-methyl-1,4-dihydroanthracen-1-one + NADPH + H(+) = (3R)-3,8,9,10-tetrahydroxy-6-methyl-1,2,3,4-tetrahydroanthracen-1-one + NADP(+). The protein operates within secondary metabolite biosynthesis. Short chain dehydrogenase/reductase; part of the gene cluster that mediates the biosynthesis of the dimeric xanthones cryptosporioptides. The pathway begins with the synthesis of atrochrysone thioester by the polyketide synthase dmx-nrPKS. The atrochrysone carboxyl ACP thioesterase dmxR1 then breaks the thioester bond and releases the atrochrysone carboxylic acid from dmx-nrPKS. Atrochrysone carboxylic acid is decarboxylated by the decarboxylase dmxR15, and oxidized by the anthrone oxygenase dmxR16 to yield emodin. Emodin is then reduced to emodin hydroquinone by the oxidoreductase dmxR7. A-ring reduction by the short chain dehydrogenase dmxR18, dehydration by the scytalone dehydratase-like protein dmxR17 and probable spontaneous re-oxidation, results in overall deoxygenation to chrysophanol. Baeyer-Villiger oxidation by the Baeyer-Villiger monooxygenase (BVMO) dmxR6 then yields monodictylactone in equilibrium with monodictyphenone. In the case of the cryptosporioptides biosynthesis, monodictylactone is reduced at C-12 to an alcohol (by the short chain dehydrogenases dmxR12 or dmxR8) and hydroxylated at C-5 by dmxR9, yielding the electron-rich aromatic which could eliminate H(2)O to form the ortho-quinonemethide, followed by tautomerisation to paraquinone and complete the formal reduction to produce the 10-methylgroup. Conjugate addition of C-4a-OH to the resulting paraquinone by the monooxygenase dmxR10 then gives cyclohexadienone, which is then reduced at C-5 by the short chain dehydrogenase dmxR3 to give the dihydroxanthone. The 6,7-epoxide in the cryptosporioptides could be introduced by the cytochrome P450 monooxygenase dmxL3. The highly reducing PKS dmxL2 manufactures butyrate, which is further carboxylated by dmxL1 to form ethylmalonate. It is not yet clear whether the carboxylation occurs while the butyrate is attached to the ACP of dmxL2, but this unusual fungal metabolite could then be esterified to O-5 by the O-acetyltransferase dmxR13. Finally, dimerization performed by dmxR5 gives the observed dimers cryptosporioptides A, B and C as the final products of the pathway. The polypeptide is Short chain dehydrogenase/reductase dmxR18 (Cryptosporiopsis sp. (strain 8999)).